The following is a 447-amino-acid chain: MNKNTWIIGFTLFAMFFGAGNLIFPTQLGLESGHFFWPAILAFALTGIGLPLLGVVVGALDKHGYIGSFNKISPRFSLIFLIIIYLTIGPLFAIPRTASTSFEMTVTPIAHNSGNLALFIFTVIYFLIVLYLCLNPNKMIDRIGSLLTPLLLITIVAMIIKGFVDFGGHSSNYGMTNAYHSNLSGFSQGFTQGYLTMDAIASIAFSMIVVNAIKTTGIQHADKIFKQTIIAGLIAAIALVFIYISLGYIGNHINIPSDTLKELKAKDQNIGTYLLTTMATKGFGTFGKYLLGIIVSLACLTTACGLIVSVSEYFHRIIPKIPYKVFVVFFILVSFILANQGLNSVIKMSVPVLSVIYPVAITVILLILIARFIPTKRIAQQIPLIIVAIESILSLITTQGWIRISLIDSLPLKEYSLEWFPIAVVATLVGYMISYFVKQSNIVYQKE.

12 consecutive transmembrane segments (helical) span residues 5–25, 40–60, 74–94, 114–134, 143–163, 193–213, 229–249, 290–310, 317–337, 350–370, 382–402, and 417–437; these read TWII…LIFP, ILAF…VGAL, PRFS…LFAI, GNLA…YLCL, IGSL…IKGF, GYLT…VNAI, IIAG…LGYI, LLGI…IVSV, IIPK…SFIL, VPVL…ILIA, IPLI…QGWI, and LEWF…SYFV.

It belongs to the branched chain amino acid transporter family.

The protein localises to the cell membrane. In terms of biological role, component of the transport system for branched-chain amino acids (leucine, isoleucine and valine), which is coupled to a proton motive force. This Staphylococcus epidermidis (strain ATCC 35984 / DSM 28319 / BCRC 17069 / CCUG 31568 / BM 3577 / RP62A) protein is Putative branched-chain amino acid carrier protein SERP0977.